Consider the following 337-residue polypeptide: Cell-surface associated glycoprotein DFI1 (337 aa).

Over 1–21 the chain is Cytoplasmic; it reads MEKLSINNNNNNRRYQSRRFD. The helical transmembrane segment at 22 to 42 threads the bilayer; the sequence is GITIIRIVVLVFIVTVSTYFV. Residues 43–269 lie on the Extracellular side of the membrane; it reads NSYTCNQPHH…NGGGLSHTNR (227 aa). Residues Asn-53, Asn-65, Asn-87, and Asn-100 are each glycosylated (N-linked (GlcNAc...) asparagine). Low complexity-rich tracts occupy residues 124–220 and 241–259; these read SSTF…TSAS and SVIS…KNND. Disordered regions lie at residues 124–224 and 241–265; these read SSTF…QHVT and SVIS…GGLS. Residues 270–290 form a helical membrane-spanning segment; sequence IVVGVVVGVGGSILIGLLAVL. The short motif at 273–277 is the Glycophorin A element; that stretch reads GVVVG. The Cytoplasmic portion of the chain corresponds to 291–337; sequence FYLRKRNNRDYEGGWTFWRKNEKLGSDEFFNGELGVRDRNINQGSNF. Positions 301-314 match the Calmodulin-binding motif; it reads YEGGWTFWRKNEKL.

It belongs to the MID2 like cell wall stress sensor family. In terms of processing, cross-linked to the carbohydrate polymers of the cell wall. O-glycosylated by MNT1 and MNT2. Also N-glycosylated.

Its subcellular location is the cell membrane. It is found in the cell septum. The protein resides in the secreted. The protein localises to the cell wall. In terms of biological role, cell-surface associated glycoprotein that acts as a plasma membrane receptor-type protein which senses the presence of matrix. Binds to calmodulin in response to environmental conditions and initiates a signaling cascade that activates CEK1, thus promoting invasive filamentation. Involved in the maintenance of the cell wall. This Candida albicans (strain SC5314 / ATCC MYA-2876) (Yeast) protein is Cell-surface associated glycoprotein DFI1.